The chain runs to 152 residues: UPF0735 ACT domain-containing protein CTC_00116 (152 aa).

The ACT domain maps to 76–151 (IISVTLNHRP…NVIKLDLIAM (76 aa)).

Belongs to the UPF0735 family.

This is UPF0735 ACT domain-containing protein CTC_00116 from Clostridium tetani (strain Massachusetts / E88).